A 638-amino-acid chain; its full sequence is 1-deoxy-D-xylulose-5-phosphate synthase (638 aa).

Residues His75 and 116–118 (AHS) each bind thiamine diphosphate. Asp147 lines the Mg(2+) pocket. Thiamine diphosphate contacts are provided by residues 148 to 149 (GA), Asn177, Tyr288, and Glu370. Asn177 is a Mg(2+) binding site.

This sequence belongs to the transketolase family. DXPS subfamily. Homodimer. It depends on Mg(2+) as a cofactor. Requires thiamine diphosphate as cofactor.

The catalysed reaction is D-glyceraldehyde 3-phosphate + pyruvate + H(+) = 1-deoxy-D-xylulose 5-phosphate + CO2. The protein operates within metabolic intermediate biosynthesis; 1-deoxy-D-xylulose 5-phosphate biosynthesis; 1-deoxy-D-xylulose 5-phosphate from D-glyceraldehyde 3-phosphate and pyruvate: step 1/1. Its function is as follows. Catalyzes the acyloin condensation reaction between C atoms 2 and 3 of pyruvate and glyceraldehyde 3-phosphate to yield 1-deoxy-D-xylulose-5-phosphate (DXP). This chain is 1-deoxy-D-xylulose-5-phosphate synthase, found in Cupriavidus necator (strain ATCC 17699 / DSM 428 / KCTC 22496 / NCIMB 10442 / H16 / Stanier 337) (Ralstonia eutropha).